The following is a 679-amino-acid chain: Methionine--tRNA ligase (679 aa).

Residues 14–24 (PYANGSIHLGH) carry the 'HIGH' region motif. Cysteine 145, cysteine 148, cysteine 158, and cysteine 161 together coordinate Zn(2+). The 'KMSKS' region motif lies at 331 to 335 (KMSKS). Lysine 334 contacts ATP. The region spanning 577–679 (AFAAVDLRIA…SGAKPGQRVK (103 aa)) is the tRNA-binding domain.

The protein belongs to the class-I aminoacyl-tRNA synthetase family. MetG type 1 subfamily. Homodimer. The cofactor is Zn(2+).

The protein localises to the cytoplasm. It carries out the reaction tRNA(Met) + L-methionine + ATP = L-methionyl-tRNA(Met) + AMP + diphosphate. In terms of biological role, is required not only for elongation of protein synthesis but also for the initiation of all mRNA translation through initiator tRNA(fMet) aminoacylation. This Pseudomonas paraeruginosa (strain DSM 24068 / PA7) (Pseudomonas aeruginosa (strain PA7)) protein is Methionine--tRNA ligase.